The following is a 66-amino-acid chain: Photosystem II reaction center protein J (66 aa).

The segment at 1–25 is disordered; sequence MSGKKSPYPDGRIPDRNPDGTPAVP. A helical membrane pass occupies residues 37-57; sequence LWLVATAGGMAVLFVVGLFFY.

This sequence belongs to the PsbJ family. In terms of assembly, PSII is composed of 1 copy each of membrane proteins PsbA, PsbB, PsbC, PsbD, PsbE, PsbF, PsbH, PsbI, PsbJ, PsbK, PsbL, PsbM, PsbT, PsbX, PsbY, PsbZ, Psb30/Ycf12, peripheral proteins PsbO, CyanoQ (PsbQ), PsbU, PsbV and a large number of cofactors. It forms dimeric complexes.

Its subcellular location is the cellular thylakoid membrane. Functionally, one of the components of the core complex of photosystem II (PSII). PSII is a light-driven water:plastoquinone oxidoreductase that uses light energy to abstract electrons from H(2)O, generating O(2) and a proton gradient subsequently used for ATP formation. It consists of a core antenna complex that captures photons, and an electron transfer chain that converts photonic excitation into a charge separation. This Synechococcus sp. (strain CC9605) protein is Photosystem II reaction center protein J.